We begin with the raw amino-acid sequence, 130 residues long: Small ribosomal subunit protein uS9 (130 aa).

A disordered region spans residues 98-130 (LKKAGMLTRDPRMKERKKYGLKKARKASQFSKR). Residues 111-130 (KERKKYGLKKARKASQFSKR) are compositionally biased toward basic residues.

It belongs to the universal ribosomal protein uS9 family.

This Lacticaseibacillus casei (strain BL23) (Lactobacillus casei) protein is Small ribosomal subunit protein uS9.